Here is a 683-residue protein sequence, read N- to C-terminus: DNA ligase (683 aa).

NAD(+) is bound by residues 29-33 (DAEFD), 79-80 (SL), and glutamate 109. The N6-AMP-lysine intermediate role is filled by lysine 111. NAD(+) is bound by residues arginine 132, glutamate 172, lysine 288, and lysine 312. Zn(2+) contacts are provided by cysteine 406, cysteine 409, cysteine 425, and cysteine 431. Residues 595 to 683 (SVPRTLAGVT…GPPAEAGEPT (89 aa)) form the BRCT domain.

This sequence belongs to the NAD-dependent DNA ligase family. LigA subfamily. The cofactor is Mg(2+). It depends on Mn(2+) as a cofactor.

It catalyses the reaction NAD(+) + (deoxyribonucleotide)n-3'-hydroxyl + 5'-phospho-(deoxyribonucleotide)m = (deoxyribonucleotide)n+m + AMP + beta-nicotinamide D-nucleotide.. Its function is as follows. DNA ligase that catalyzes the formation of phosphodiester linkages between 5'-phosphoryl and 3'-hydroxyl groups in double-stranded DNA using NAD as a coenzyme and as the energy source for the reaction. It is essential for DNA replication and repair of damaged DNA. This chain is DNA ligase, found in Mycobacterium ulcerans (strain Agy99).